Consider the following 305-residue polypeptide: Peroxisome assembly protein 26 (305 aa).

Positions 1 to 20 (MKSDSSTSAAPLRGLGGPLR) are disordered. Over 1-246 (MKSDSSTSAA…RQLWDSAVSH (246 aa)) the chain is Cytoplasmic. Residues 247–267 (FFSLPFKKSLLAALILCLLVV) form a helical; Signal-anchor for type II membrane protein membrane-spanning segment. Residues 268 to 305 (RFDPASPSSLHFLYKLAQLFRWIRKAAFSRLYQLRIRD) lie on the Peroxisomal matrix side of the membrane.

Belongs to the peroxin-26 family. Interacts (via its cytoplasmic domain) with PEX6; interaction is direct and is ATP-dependent. Interacts with PEX1; interaction is indirect and is mediated via interaction with PEX6. Widely expressed. Highly expressed in kidney, liver, brain and skeletal muscles. Expressed at intermediate level in pancreas, placenta and heart. Weakly expressed in lung.

The protein resides in the peroxisome membrane. Functionally, peroxisomal docking factor that anchors PEX1 and PEX6 to peroxisome membranes. PEX26 is therefore required for the formation of the PEX1-PEX6 AAA ATPase complex, a complex that mediates the extraction of the PEX5 receptor from peroxisomal membrane. The sequence is that of Peroxisome assembly protein 26 from Homo sapiens (Human).